The sequence spans 394 residues: Glycogen synthase kinase 1 (394 aa).

Positions 35–318 (YTQCKIVGNG…AIDAMVHPFF (284 aa)) constitute a Protein kinase domain. ATP contacts are provided by residues 41-49 (VGNGSFGVV) and Lys-64.

It belongs to the protein kinase superfamily. CMGC Ser/Thr protein kinase family. GSK-3 subfamily.

It localises to the cytoplasm. The enzyme catalyses L-seryl-[protein] + ATP = O-phospho-L-seryl-[protein] + ADP + H(+). Protein kinase that acts downstream of the MPS1 MAPK cascade as a highly conservative signal modulator that dictates growth, conidiation and pathogenicity. Phosphorylates HAT1 at 'Ser-8' to block its translocation from the nucleus to the cytoplasm where HAT1 positively regulates appressorium development and pathogenicity. The sequence is that of Glycogen synthase kinase 1 from Pyricularia oryzae (Rice blast fungus).